The primary structure comprises 125 residues: Large ribosomal subunit protein bL19 (125 aa).

The protein belongs to the bacterial ribosomal protein bL19 family.

Its function is as follows. This protein is located at the 30S-50S ribosomal subunit interface and may play a role in the structure and function of the aminoacyl-tRNA binding site. The sequence is that of Large ribosomal subunit protein bL19 from Synechococcus sp. (strain JA-2-3B'a(2-13)) (Cyanobacteria bacterium Yellowstone B-Prime).